The following is a 1024-amino-acid chain: NLR family CARD domain-containing protein 4 (1024 aa).

One can recognise a CARD domain in the interval methionine 1–asparagine 88. The interval glutamate 95–glycine 298 is nucleotide-binding domain (NBD). Residues threonine 135, glycine 172–threonine 177, and histidine 443 each bind ATP. The NACHT domain occupies serine 163–lysine 476. The winged-helix domain (WHD) stretch occupies residues alanine 356–glutamate 463. Serine 533 carries the phosphoserine modification. LRR repeat units follow at residues phenylalanine 578–phenylalanine 598, lysine 656–tyrosine 679, valine 735–serine 758, leucine 762–glutamate 785, leucine 787–valine 812, glutamate 824–leucine 847, isoleucine 848–glutamate 870, leucine 878–glutamine 902, lysine 911–methionine 933, leucine 936–asparagine 963, lysine 965–arginine 985, and glutamate 999–leucine 1021.

In terms of assembly, homooligomer; homooligomerizes following activation of Naip proteins by pathogenic proteins such as S.typhimurium (Salmonella) flagellin or PrgJ. Component of the NLRC4 inflammasome, at least composed of NLRC4, caspase-1 (CASP1) and some NAIP protein (Naip, Naip2 or Naip5). Interacts with Naip5 and Naip6; following Naip5 and Naip6 engagement by Salmonella flagellin. Interacts with Naip2; following Naip2 engagement by Salmonella PrgJ. The inflammasome is a huge complex that contains multiple copies of NLRC4 and a single Naip protein chain. Some NLRC4 inflammasomes contain PYCARD/ASC, while some others directly contact and activate CASP1. Interacts with EIF2AK2/PKR. Phosphorylated at Ser-533 following infection of macrophages with S.typhimurium (Salmonella). Phosphorylation is essential for NLRC4 inflammasome function to promote caspase-1 activation and pyroptosis. PRKCD phosphorylates Ser-533 in vitro. As to expression, expressed by intestinal mononuclear phagocytes.

The protein localises to the cytoplasm. The protein resides in the cytosol. It localises to the inflammasome. In terms of biological role, key component of inflammasomes that indirectly senses specific proteins from pathogenic bacteria and fungi and responds by assembling an inflammasome complex that promotes caspase-1 activation, cytokine production and macrophage pyroptosis. The NLRC4 inflammasome is activated as part of the innate immune response to a range of intracellular bacteria. It senses pathogenic proteins of the type III secretion system (T3SS) and type IV secretion system (T4SS) such as flagellin and PrgJ-like rod proteins via the Naip proteins (Naip1, Naip2 or Naip5): specific Naip proteins recognize and bind pathogenic proteins, driving assembly and activation of the NLRC4 inflammasome. The NLRC4 inflammasome senses Gram-negative bacteria such as L.pneumophila and P.aeruginosa, enteric pathogens S.typhimurium (Salmonella) and S.flexneri and fungal pathogen C.albicans. In intestine, the NLRC4 inflammasome is able to discriminate between commensal and pathogenic bacteria and specifically drives production of interleukin-1 beta (IL1B) in response to infection by Salmonella or P.aeruginosa. In case of L.pneumophila infection the inflammasome acts by activating caspase-7. The protein is NLR family CARD domain-containing protein 4 (Nlrc4) of Mus musculus (Mouse).